The sequence spans 179 residues: Natural killer cells antigen CD94 (179 aa).

Topologically, residues 1–10 (MAVSRITRWR) are cytoplasmic. Residues 11–31 (LMSMFFGIKCLFLIVALGVLV) traverse the membrane as a helical; Signal-anchor for type II membrane protein segment. Over 32 to 179 (KNSFTIQNIQ…NRFICKQLPT (148 aa)) the chain is Extracellular. 4 disulfides stabilise this stretch: Cys-58-Cys-70, Cys-61-Cys-72, Cys-89-Cys-174, and Cys-152-Cys-166. One can recognise a C-type lectin domain in the interval 68 to 175 (HQCSCYFISK…CENKNRFICK (108 aa)). Residue Asn-93 is glycosylated (N-linked (GlcNAc...) asparagine).

In terms of assembly, can form disulfide-bonded heterodimer with NKG2 family members KLRC1 and KLRC2. KLRD1-KLRC1 heterodimer interacts with peptide-bound MHC-E-B2M heterotrimeric complex. KLRD1 plays a prominent role in directly interacting with MHC-E. KLRD1-KLRC1 interacts with much higher affinity with peptide-bound MHC-E-B2M than KLRD1-KLRC2. Interacts with the adapter protein TYROBP/DAP12; this interaction is required for cell surface expression and cell activation.

The protein localises to the cell membrane. Immune receptor involved in self-nonself discrimination. In complex with KLRC1 or KLRC2 on cytotoxic and regulatory lymphocyte subsets, recognizes non-classical major histocompatibility (MHC) class Ib molecule MHC-E loaded with self-peptides derived from the signal sequence of classical MHC class Ia and non-classical MHC class Ib molecules. Enables cytotoxic cells to monitor the expression of MHC class I molecules in healthy cells and to tolerate self. Primarily functions as a ligand binding subunit as it lacks the capacity to signal. Functionally, KLRD1-KLRC1 acts as an immune inhibitory receptor. Key inhibitory receptor on natural killer (NK) cells that regulates their activation and effector functions. Dominantly counteracts T cell receptor signaling on a subset of memory/effector CD8-positive T cells as part of an antigen-driven response to avoid autoimmunity. On intraepithelial CD8-positive gamma-delta regulatory T cells triggers TGFB1 secretion, which in turn limits the cytotoxic programming of intraepithelial CD8-positive alpha-beta T cells, distinguishing harmless from pathogenic antigens. In MHC-E-rich tumor microenvironment, acts as an immune inhibitory checkpoint and may contribute to progressive loss of effector functions of NK cells and tumor-specific T cells, a state known as cell exhaustion. Upon MHC-E-peptide binding, transmits intracellular signals through KLRC1 immunoreceptor tyrosine-based inhibition motifs (ITIMs) by recruiting INPP5D/SHIP-1 and INPPL1/SHIP-2 tyrosine phosphatases to ITIMs, and ultimately opposing signals transmitted by activating receptors through dephosphorylation of proximal signaling molecules. Its function is as follows. KLRD1-KLRC2 acts as an immune activating receptor. On cytotoxic lymphocyte subsets recognizes MHC-E loaded with signal sequence-derived peptides from non-classical MHC class Ib MHC-G molecules, likely playing a role in the generation and effector functions of adaptive NK cells and in maternal-fetal tolerance during pregnancy. Regulates the effector functions of terminally differentiated cytotoxic lymphocyte subsets, and in particular may play a role in adaptive NK cell response to viral infection. Upon MHC-E-peptide binding, transmits intracellular signals via the adapter protein TYROBP/DAP12, triggering the phosphorylation of proximal signaling molecules and cell activation. The chain is Natural killer cells antigen CD94 (Klrd1) from Rattus norvegicus (Rat).